The chain runs to 422 residues: UDP-N-acetylglucosamine 1-carboxyvinyltransferase (422 aa).

22-23 is a phosphoenolpyruvate binding site; it reads KN. Residue Arg94 coordinates UDP-N-acetyl-alpha-D-glucosamine. The Proton donor role is filled by Cys118. At Cys118 the chain carries 2-(S-cysteinyl)pyruvic acid O-phosphothioketal. UDP-N-acetyl-alpha-D-glucosamine contacts are provided by residues 123–127, Asp308, and Ile330; that span reads RPVDL.

This sequence belongs to the EPSP synthase family. MurA subfamily.

The protein localises to the cytoplasm. The catalysed reaction is phosphoenolpyruvate + UDP-N-acetyl-alpha-D-glucosamine = UDP-N-acetyl-3-O-(1-carboxyvinyl)-alpha-D-glucosamine + phosphate. Its pathway is cell wall biogenesis; peptidoglycan biosynthesis. In terms of biological role, cell wall formation. Adds enolpyruvyl to UDP-N-acetylglucosamine. The sequence is that of UDP-N-acetylglucosamine 1-carboxyvinyltransferase from Dinoroseobacter shibae (strain DSM 16493 / NCIMB 14021 / DFL 12).